Reading from the N-terminus, the 113-residue chain is Iron-sulfur cluster insertion protein ErpA (113 aa).

Iron-sulfur cluster is bound by residues C41, C105, and C107.

Belongs to the HesB/IscA family. In terms of assembly, homodimer. It depends on iron-sulfur cluster as a cofactor.

Required for insertion of 4Fe-4S clusters for at least IspG. The protein is Iron-sulfur cluster insertion protein ErpA of Actinobacillus pleuropneumoniae serotype 3 (strain JL03).